The sequence spans 421 residues: MGMTMTQKILAAHANLPEVKAGQLIEANLDLVLANDITGPVAIHEIQRLKKKTVFDKDKIALVPDHFTPNKDIKSAEHCKCVREFAKEHDITNYFEIGEMGIEHALLPEKGLIVAGETCIGADSHTCTYGALGAFSTGVGSTDMGAGMITGKAWFKVPAAIKFILTGEPKEWVSGKDVILHIIGMIGVDGALYKSMEFVGAGIKNLTMDDRFTIANMAIEAGAKNGIFPVDDLTISYMKEHGAKPYTIYEADEDAEYEQIITINLSELEPTVAFPHLPENTKTVKEAGEVRIDQVVIGSCTNGRIGDLRIAAKVLEGRKVAKGMRAIVFPATQAIYLQAIEEGLIQTFIKAGCVVSTPTCGPCLGGHMGILAAGERAASTTNRNFVGRMGHVESEVYLCSPAVAAASAVTGKISEPSELFS.

Cysteine 300, cysteine 360, and cysteine 363 together coordinate [4Fe-4S] cluster.

The protein belongs to the aconitase/IPM isomerase family. LeuC type 2 subfamily. In terms of assembly, heterodimer of LeuC and LeuD. It depends on [4Fe-4S] cluster as a cofactor.

It carries out the reaction (2R,3S)-3-isopropylmalate = (2S)-2-isopropylmalate. It functions in the pathway amino-acid biosynthesis; L-leucine biosynthesis; L-leucine from 3-methyl-2-oxobutanoate: step 2/4. Catalyzes the isomerization between 2-isopropylmalate and 3-isopropylmalate, via the formation of 2-isopropylmaleate. This chain is 3-isopropylmalate dehydratase large subunit, found in Lachnoclostridium phytofermentans (strain ATCC 700394 / DSM 18823 / ISDg) (Clostridium phytofermentans).